A 255-amino-acid polypeptide reads, in one-letter code: uncharacterized protein (255 aa).

An N-terminal signal peptide occupies residues 1 to 28; sequence MFKLNFKNNYKVLTLLFSLTLSMFVSNA. N-linked (GlcNAc...) asparagine glycosylation is found at N38, N61, and N83.

Its subcellular location is the secreted. This is an uncharacterized protein from Dictyostelium discoideum (Social amoeba).